The chain runs to 181 residues: ATP synthase subunit delta (181 aa).

This sequence belongs to the ATPase delta chain family. F-type ATPases have 2 components, F(1) - the catalytic core - and F(0) - the membrane proton channel. F(1) has five subunits: alpha(3), beta(3), gamma(1), delta(1), epsilon(1). F(0) has three main subunits: a(1), b(2) and c(10-14). The alpha and beta chains form an alternating ring which encloses part of the gamma chain. F(1) is attached to F(0) by a central stalk formed by the gamma and epsilon chains, while a peripheral stalk is formed by the delta and b chains.

Its subcellular location is the cell membrane. Its function is as follows. F(1)F(0) ATP synthase produces ATP from ADP in the presence of a proton or sodium gradient. F-type ATPases consist of two structural domains, F(1) containing the extramembraneous catalytic core and F(0) containing the membrane proton channel, linked together by a central stalk and a peripheral stalk. During catalysis, ATP synthesis in the catalytic domain of F(1) is coupled via a rotary mechanism of the central stalk subunits to proton translocation. Functionally, this protein is part of the stalk that links CF(0) to CF(1). It either transmits conformational changes from CF(0) to CF(1) or is implicated in proton conduction. The chain is ATP synthase subunit delta from Bacillus pumilus (strain SAFR-032).